The primary structure comprises 250 residues: Cobalt transport protein CbiM (250 aa).

The signal sequence occupies residues 1-24; it reads MKYWGTALLGAFCVFFFTPNTAYA. The next 6 membrane-spanning stretches (helical) occupy residues 32–52, 67–87, 99–119, 122–142, 161–181, and 203–223; these read LPAG…FWGI, MLLG…IPSV, LGAI…VLLF, LLLA…MGVM, VAVF…TSLQ, and IFAI…VFVF.

It belongs to the CbiM family. As to quaternary structure, forms an energy-coupling factor (ECF) transporter complex composed of an ATP-binding protein (A component, CbiO), a transmembrane protein (T component, CbiQ) and 2 possible substrate-capture proteins (S components, CbiM and CbiN) of unknown stoichimetry.

The protein localises to the cell membrane. Its pathway is cofactor biosynthesis; adenosylcobalamin biosynthesis. Functionally, part of the energy-coupling factor (ECF) transporter complex CbiMNOQ involved in cobalt import. The chain is Cobalt transport protein CbiM from Desulforamulus reducens (strain ATCC BAA-1160 / DSM 100696 / MI-1) (Desulfotomaculum reducens).